A 176-amino-acid chain; its full sequence is ATP-dependent protease subunit HslV (176 aa).

T2 is an active-site residue. G157, C160, and T163 together coordinate Na(+).

This sequence belongs to the peptidase T1B family. HslV subfamily. A double ring-shaped homohexamer of HslV is capped on each side by a ring-shaped HslU homohexamer. The assembly of the HslU/HslV complex is dependent on binding of ATP.

The protein resides in the cytoplasm. It catalyses the reaction ATP-dependent cleavage of peptide bonds with broad specificity.. With respect to regulation, allosterically activated by HslU binding. Its function is as follows. Protease subunit of a proteasome-like degradation complex believed to be a general protein degrading machinery. The protein is ATP-dependent protease subunit HslV of Pseudomonas syringae pv. tomato (strain ATCC BAA-871 / DC3000).